Here is a 59-residue protein sequence, read N- to C-terminus: MLSWALTFLVVAIIAAVLGFTAVAGTAIEIAKIIFYVAIVLFLISAVMGFLRRGSSRTL.

2 helical membrane-spanning segments follow: residues W4–A24 and I30–F50.

It belongs to the UPF0391 family.

It localises to the cell membrane. The protein is UPF0391 membrane protein AZC_4184 of Azorhizobium caulinodans (strain ATCC 43989 / DSM 5975 / JCM 20966 / LMG 6465 / NBRC 14845 / NCIMB 13405 / ORS 571).